Reading from the N-terminus, the 193-residue chain is Potassium-transporting ATPase KdpC subunit (193 aa).

A helical transmembrane segment spans residues 8 to 28 (VVLLIFLTLITGVAYPLLATG).

Belongs to the KdpC family. As to quaternary structure, the system is composed of three essential subunits: KdpA, KdpB and KdpC.

It is found in the cell inner membrane. Part of the high-affinity ATP-driven potassium transport (or Kdp) system, which catalyzes the hydrolysis of ATP coupled with the electrogenic transport of potassium into the cytoplasm. This subunit acts as a catalytic chaperone that increases the ATP-binding affinity of the ATP-hydrolyzing subunit KdpB by the formation of a transient KdpB/KdpC/ATP ternary complex. This Photorhabdus laumondii subsp. laumondii (strain DSM 15139 / CIP 105565 / TT01) (Photorhabdus luminescens subsp. laumondii) protein is Potassium-transporting ATPase KdpC subunit.